Here is a 72-residue protein sequence, read N- to C-terminus: Exodeoxyribonuclease 7 small subunit (72 aa).

This sequence belongs to the XseB family. As to quaternary structure, heterooligomer composed of large and small subunits.

The protein localises to the cytoplasm. It carries out the reaction Exonucleolytic cleavage in either 5'- to 3'- or 3'- to 5'-direction to yield nucleoside 5'-phosphates.. Functionally, bidirectionally degrades single-stranded DNA into large acid-insoluble oligonucleotides, which are then degraded further into small acid-soluble oligonucleotides. The sequence is that of Exodeoxyribonuclease 7 small subunit from Chlamydia trachomatis serovar L2 (strain ATCC VR-902B / DSM 19102 / 434/Bu).